Consider the following 322-residue polypeptide: (12E)-labda-8(17),12,14-triene synthase (322 aa).

The span at 1–11 (MNDATRTSTTP) shows a compositional bias: polar residues. The disordered stretch occupies residues 1–26 (MNDATRTSTTPPALPMPDLRDSFPGP). 2 residues coordinate Mg(2+): Asp93 and Glu98. Residues 93–98 (DDAHGE) carry the DDXXXE motif motif. Arg188 lines the substrate pocket. Positions 234 and 238 each coordinate Mg(2+). Residues 234 to 242 (NDLASYAKE) carry the NXXXSXXXE motif motif. A substrate-binding site is contributed by Lys241. Glu242 contributes to the Mg(2+) binding site. 319–320 (RY) is a binding site for substrate.

The protein belongs to the terpene synthase family. Mg(2+) serves as cofactor.

The enzyme catalyses (+)-copalyl diphosphate = (12E)-labda-8(17),12,14-triene + diphosphate. In terms of biological role, involved in the biosynthesis of the labdane-type bicyclic diterpene labda-8(17),12(E),14-triene. Catalyzes the conversion of (+)-copalyl diphosphate to yield labda-8(17),12(E),14-triene. This Streptomyces anulatus (Streptomyces chrysomallus) protein is (12E)-labda-8(17),12,14-triene synthase.